Here is a 308-residue protein sequence, read N- to C-terminus: Glutaminase (308 aa).

Substrate-binding residues include serine 66, asparagine 117, glutamate 161, asparagine 168, tyrosine 192, tyrosine 244, and valine 262.

The protein belongs to the glutaminase family. Homotetramer.

It catalyses the reaction L-glutamine + H2O = L-glutamate + NH4(+). In Salmonella dublin (strain CT_02021853), this protein is Glutaminase.